We begin with the raw amino-acid sequence, 775 residues long: Venom dipeptidyl peptidase 4 (775 aa).

Positions Met-1 to Gly-23 are cleaved as a signal peptide. Asn-68 and Asn-239 each carry an N-linked (GlcNAc...) asparagine glycan. Intrachain disulfides connect Cys-450–Cys-453 and Cys-463–Cys-481. N-linked (GlcNAc...) asparagine glycosylation is found at Asn-473, Asn-505, Asn-578, and Asn-631. Residue Ser-639 is the Charge relay system of the active site. Cys-659 and Cys-770 form a disulfide bridge. N-linked (GlcNAc...) asparagine glycans are attached at residues Asn-689 and Asn-694. Residues Asp-718 and His-750 each act as charge relay system in the active site.

It belongs to the peptidase S9B family. DPPIV subfamily. In terms of tissue distribution, expressed by the venom duct.

The protein localises to the secreted. The catalysed reaction is Release of an N-terminal dipeptide, Xaa-Yaa-|-Zaa-, from a polypeptide, preferentially when Yaa is Pro, provided Zaa is neither Pro nor hydroxyproline.. With respect to regulation, inhibited by diprotin A. Its function is as follows. Venom dipeptidyl-peptidase which removes N-terminal dipeptides sequentially from polypeptides having unsubstituted N-termini provided that the penultimate residue is proline. May process promelittin into its active form and/or modulate the chemotactic activity of immune cells after the insect sting. The sequence is that of Venom dipeptidyl peptidase 4 from Apis mellifera (Honeybee).